The following is a 303-amino-acid chain: Probable 5-dehydro-4-deoxyglucarate dehydratase (303 aa).

This sequence belongs to the DapA family.

The catalysed reaction is 5-dehydro-4-deoxy-D-glucarate + H(+) = 2,5-dioxopentanoate + CO2 + H2O. Its pathway is carbohydrate acid metabolism; D-glucarate degradation; 2,5-dioxopentanoate from D-glucarate: step 2/2. This Paracidovorax citrulli (strain AAC00-1) (Acidovorax citrulli) protein is Probable 5-dehydro-4-deoxyglucarate dehydratase.